The sequence spans 219 residues: GPI-anchored hemophore PGA7 (219 aa).

A signal peptide spans 1–13; that stretch reads MHFIFYLILLVSA. The CFEM domain maps to 17 to 126; sequence GNFGTYPKVP…SMLSTAAGDA (110 aa). 4 disulfides stabilise this stretch: Cys45–Cys85, Cys49–Cys80, Cys59–Cys66, and Cys68–Cys101. Asp63 is a heme binding site. The interval 151-194 is disordered; sequence VVSETGSASETGSSESAQSTTTGSSSTGSSSTDSSSSSSSSPSS. A compositionally biased stretch (low complexity) spans 153–194; it reads SETGSASETGSSESAQSTTTGSSSTGSSSTDSSSSSSSSPSS. The GPI-anchor amidated serine moiety is linked to residue Ser194. Residues 195-219 constitute a propeptide, removed in mature form; the sequence is SANFAVLQTGGIGSVILGFMMYLLV.

It belongs to the RBT5 family. Interacts with RBT5. Post-translationally, the GPI-anchor is attached to the protein in the endoplasmic reticulum and serves to target the protein to the cell surface. There, the glucosamine-inositol phospholipid moiety is cleaved off and the GPI-modified mannoprotein is covalently attached via its lipidless GPI glycan remnant to the 1,6-beta-glucan of the outer cell wall layer.

The protein resides in the secreted. The protein localises to the cell wall. It is found in the cell membrane. Its function is as follows. GPI-linked hyphal surface heme-binding protein involved in heme-iron utilization. Heme transfer occurs between PGA7, RBT5 and CSA2 supporting a model in which the 3 CFEM proteins cooperate in a heme-acquisition system and form a cross-cell wall heme-transfer cascade. The ability to acquire iron from host tissues is a major virulence factor of pathogenic microorganisms. Required for biofilm formation. The polypeptide is GPI-anchored hemophore PGA7 (Candida albicans (strain SC5314 / ATCC MYA-2876) (Yeast)).